Here is a 329-residue protein sequence, read N- to C-terminus: Holliday junction branch migration complex subunit RuvB (329 aa).

Positions 1–180 are large ATPase domain (RuvB-L); that stretch reads MKNILQSTEC…FGIPIHLEFY (180 aa). Residues R20, G61, K64, T65, T66, 127–129, R170, Y180, and R217 contribute to the ATP site; that span reads EDF. T65 serves as a coordination point for Mg(2+). Residues 181–252 are small ATPAse domain (RuvB-S); the sequence is STEELTKVIQ…FADKALLRLG (72 aa). The tract at residues 255 to 329 is head domain (RuvB-H); that stretch reads KLGLDRQDIQ…ISHLREQEYI (75 aa). DNA contacts are provided by R308 and R313.

The protein belongs to the RuvB family. In terms of assembly, homohexamer. Forms an RuvA(8)-RuvB(12)-Holliday junction (HJ) complex. HJ DNA is sandwiched between 2 RuvA tetramers; dsDNA enters through RuvA and exits via RuvB. An RuvB hexamer assembles on each DNA strand where it exits the tetramer. Each RuvB hexamer is contacted by two RuvA subunits (via domain III) on 2 adjacent RuvB subunits; this complex drives branch migration. In the full resolvosome a probable DNA-RuvA(4)-RuvB(12)-RuvC(2) complex forms which resolves the HJ.

It is found in the cytoplasm. The enzyme catalyses ATP + H2O = ADP + phosphate + H(+). Functionally, the RuvA-RuvB-RuvC complex processes Holliday junction (HJ) DNA during genetic recombination and DNA repair, while the RuvA-RuvB complex plays an important role in the rescue of blocked DNA replication forks via replication fork reversal (RFR). RuvA specifically binds to HJ cruciform DNA, conferring on it an open structure. The RuvB hexamer acts as an ATP-dependent pump, pulling dsDNA into and through the RuvAB complex. RuvB forms 2 homohexamers on either side of HJ DNA bound by 1 or 2 RuvA tetramers; 4 subunits per hexamer contact DNA at a time. Coordinated motions by a converter formed by DNA-disengaged RuvB subunits stimulates ATP hydrolysis and nucleotide exchange. Immobilization of the converter enables RuvB to convert the ATP-contained energy into a lever motion, pulling 2 nucleotides of DNA out of the RuvA tetramer per ATP hydrolyzed, thus driving DNA branch migration. The RuvB motors rotate together with the DNA substrate, which together with the progressing nucleotide cycle form the mechanistic basis for DNA recombination by continuous HJ branch migration. Branch migration allows RuvC to scan DNA until it finds its consensus sequence, where it cleaves and resolves cruciform DNA. This chain is Holliday junction branch migration complex subunit RuvB, found in Ehrlichia chaffeensis (strain ATCC CRL-10679 / Arkansas).